The following is a 1066-amino-acid chain: Beta-galactosidase (1066 aa).

Residues Asn-110 and Asp-209 each coordinate substrate. Asp-209 contacts Na(+). Mg(2+) contacts are provided by Glu-432, His-434, and Glu-477. Substrate contacts are provided by residues Glu-477 and 553 to 556; that span reads EYAH. The Proton donor role is filled by Glu-477. The active-site Nucleophile is the Glu-553. Asn-613 is a binding site for Mg(2+). The Na(+) site is built by Phe-617 and Asn-620. Residues Asn-620 and Trp-1041 each coordinate substrate.

It belongs to the glycosyl hydrolase 2 family. As to quaternary structure, homotetramer. Requires Mg(2+) as cofactor. Na(+) is required as a cofactor.

It carries out the reaction Hydrolysis of terminal non-reducing beta-D-galactose residues in beta-D-galactosides.. This Yersinia pseudotuberculosis serotype O:1b (strain IP 31758) protein is Beta-galactosidase.